A 410-amino-acid chain; its full sequence is Peptidase T (410 aa).

His-79 lines the Zn(2+) pocket. The active site involves Asp-81. Residue Asp-142 coordinates Zn(2+). Glu-176 serves as the catalytic Proton acceptor. Zn(2+)-binding residues include Glu-177, Asp-199, and His-381.

This sequence belongs to the peptidase M20B family. Zn(2+) is required as a cofactor.

It localises to the cytoplasm. The enzyme catalyses Release of the N-terminal residue from a tripeptide.. Functionally, cleaves the N-terminal amino acid of tripeptides. The sequence is that of Peptidase T from Bacillus pumilus (strain SAFR-032).